The chain runs to 457 residues: Argininosuccinate lyase (457 aa).

This sequence belongs to the lyase 1 family. Argininosuccinate lyase subfamily.

The protein resides in the cytoplasm. The enzyme catalyses 2-(N(omega)-L-arginino)succinate = fumarate + L-arginine. Its pathway is amino-acid biosynthesis; L-arginine biosynthesis; L-arginine from L-ornithine and carbamoyl phosphate: step 3/3. In Erwinia tasmaniensis (strain DSM 17950 / CFBP 7177 / CIP 109463 / NCPPB 4357 / Et1/99), this protein is Argininosuccinate lyase.